Consider the following 591-residue polypeptide: Aspartate--tRNA(Asp/Asn) ligase (591 aa).

Glu175 is a binding site for L-aspartate. Residues 199–202 (QQFK) form an aspartate region. 2 residues coordinate L-aspartate: Arg221 and His453. 221 to 223 (RDE) contributes to the ATP binding site. Position 486 (Glu486) interacts with ATP. Residue Arg493 participates in L-aspartate binding. ATP is bound at residue 538-541 (GIDR).

It belongs to the class-II aminoacyl-tRNA synthetase family. Type 1 subfamily. In terms of assembly, homodimer.

The protein localises to the cytoplasm. The catalysed reaction is tRNA(Asx) + L-aspartate + ATP = L-aspartyl-tRNA(Asx) + AMP + diphosphate. Aspartyl-tRNA synthetase with relaxed tRNA specificity since it is able to aspartylate not only its cognate tRNA(Asp) but also tRNA(Asn). Reaction proceeds in two steps: L-aspartate is first activated by ATP to form Asp-AMP and then transferred to the acceptor end of tRNA(Asp/Asn). In Roseobacter denitrificans (strain ATCC 33942 / OCh 114) (Erythrobacter sp. (strain OCh 114)), this protein is Aspartate--tRNA(Asp/Asn) ligase.